A 416-amino-acid polypeptide reads, in one-letter code: Serine/threonine transporter SstT (416 aa).

The next 9 membrane-spanning stretches (helical) occupy residues 15–35, 49–69, 82–102, 141–161, 192–212, 217–237, 288–308, 316–336, and 363–383; these read SLVS…MFMP, VGAL…AAII, ILLL…VASF, ALLD…GIAM, LGIL…ALFG, LVVL…LIVF, VSIP…ITVL, LGME…TISA, and IAMQ…SAET.

Belongs to the dicarboxylate/amino acid:cation symporter (DAACS) (TC 2.A.23) family.

It is found in the cell inner membrane. It carries out the reaction L-serine(in) + Na(+)(in) = L-serine(out) + Na(+)(out). The catalysed reaction is L-threonine(in) + Na(+)(in) = L-threonine(out) + Na(+)(out). Functionally, involved in the import of serine and threonine into the cell, with the concomitant import of sodium (symport system). This Aeromonas hydrophila subsp. hydrophila (strain ATCC 7966 / DSM 30187 / BCRC 13018 / CCUG 14551 / JCM 1027 / KCTC 2358 / NCIMB 9240 / NCTC 8049) protein is Serine/threonine transporter SstT.